We begin with the raw amino-acid sequence, 189 residues long: Peptidyl-tRNA hydrolase (189 aa).

Tyr-15 provides a ligand contact to tRNA. Residue His-20 is the Proton acceptor of the active site. TRNA is bound by residues Phe-66, Asn-68, and Asn-114.

This sequence belongs to the PTH family. Monomer.

It is found in the cytoplasm. The catalysed reaction is an N-acyl-L-alpha-aminoacyl-tRNA + H2O = an N-acyl-L-amino acid + a tRNA + H(+). Its function is as follows. Hydrolyzes ribosome-free peptidyl-tRNAs (with 1 or more amino acids incorporated), which drop off the ribosome during protein synthesis, or as a result of ribosome stalling. Functionally, catalyzes the release of premature peptidyl moieties from peptidyl-tRNA molecules trapped in stalled 50S ribosomal subunits, and thus maintains levels of free tRNAs and 50S ribosomes. This Streptococcus pyogenes serotype M1 protein is Peptidyl-tRNA hydrolase.